We begin with the raw amino-acid sequence, 333 residues long: uncharacterized protein (333 aa).

This is an uncharacterized protein from Gallus gallus (Chicken).